Here is a 387-residue protein sequence, read N- to C-terminus: 3-ketoacyl-CoA thiolase (387 aa).

The active-site Acyl-thioester intermediate is C91. Residues H343 and C373 each act as proton acceptor in the active site.

Belongs to the thiolase-like superfamily. Thiolase family. In terms of assembly, heterotetramer of two alpha chains (FadB) and two beta chains (FadA).

Its subcellular location is the cytoplasm. It carries out the reaction an acyl-CoA + acetyl-CoA = a 3-oxoacyl-CoA + CoA. Its pathway is lipid metabolism; fatty acid beta-oxidation. Functionally, catalyzes the final step of fatty acid oxidation in which acetyl-CoA is released and the CoA ester of a fatty acid two carbons shorter is formed. This is 3-ketoacyl-CoA thiolase from Salmonella choleraesuis (strain SC-B67).